The chain runs to 327 residues: Malate dehydrogenase (327 aa).

12-18 (GAAGQIC) is an NAD(+) binding site. Arg92 and Arg98 together coordinate substrate. Residues Asn105, Gln112, and 129–131 (TGN) contribute to the NAD(+) site. Residues Asn131 and Arg162 each coordinate substrate. His187 acts as the Proton acceptor in catalysis.

This sequence belongs to the LDH/MDH superfamily. MDH type 2 family.

The catalysed reaction is (S)-malate + NAD(+) = oxaloacetate + NADH + H(+). Catalyzes the reversible oxidation of malate to oxaloacetate. This Cutibacterium acnes (strain DSM 16379 / KPA171202) (Propionibacterium acnes) protein is Malate dehydrogenase.